The chain runs to 193 residues: Xanthine phosphoribosyltransferase (193 aa).

Xanthine is bound by residues L20 and N27. 128–132 contacts 5-phospho-alpha-D-ribose 1-diphosphate; sequence ANGDA. K156 lines the xanthine pocket.

This sequence belongs to the purine/pyrimidine phosphoribosyltransferase family. Xpt subfamily. As to quaternary structure, homodimer.

It localises to the cytoplasm. It carries out the reaction XMP + diphosphate = xanthine + 5-phospho-alpha-D-ribose 1-diphosphate. The protein operates within purine metabolism; XMP biosynthesis via salvage pathway; XMP from xanthine: step 1/1. Converts the preformed base xanthine, a product of nucleic acid breakdown, to xanthosine 5'-monophosphate (XMP), so it can be reused for RNA or DNA synthesis. The polypeptide is Xanthine phosphoribosyltransferase (Staphylococcus saprophyticus subsp. saprophyticus (strain ATCC 15305 / DSM 20229 / NCIMB 8711 / NCTC 7292 / S-41)).